The sequence spans 395 residues: Putative gustatory receptor 58a (395 aa).

The Cytoplasmic segment spans residues 1–32; the sequence is MLLKFMYIYGIGCGLMPAPLKKGQFLLGYKQR. A helical transmembrane segment spans residues 33–53; sequence WYLIYTACLHGGLLTVLPFTF. Residues 54–72 lie on the Extracellular side of the membrane; the sequence is PHYMYDDSYMSSNPVLKWT. A helical transmembrane segment spans residues 73 to 93; the sequence is FNLTNITRIMAMFSGVLLMWF. Topologically, residues 94–131 are cytoplasmic; it reads RRKRILNLGENLILHCLKCKTLDNRSKKYSKLRKRVRN. Residues 132–152 traverse the membrane as a helical segment; the sequence is VLFQMLLVANLSILLGALILF. Topologically, residues 153–169 are extracellular; sequence RIHSVQRISKTAMIVAH. The chain crosses the membrane as a helical span at residues 170–190; that stretch reads ITQFIYVVFMMTGICVILLVL. The Cytoplasmic segment spans residues 191-250; sequence HWQSERLQIALKDLCSFLNHEERNSLTLSENKANRSLGKLAKLFKLFAENQRLVREVFRT. Residues 251-271 form a helical membrane-spanning segment; sequence FDLPIALLLLKMFVTNVNLVY. Topologically, residues 272–288 are extracellular; the sequence is HGVQFGNDTIETSSYTR. N-linked (GlcNAc...) asparagine glycosylation occurs at Asn-278. The helical transmembrane segment at 289–309 threads the bilayer; sequence IVGQWVVISHYWSAVLLMNVV. The Cytoplasmic segment spans residues 310-366; that stretch reads DDVTRRSDLKMGDLLREFSHLELVKRDFHLQLELFSDHLRCHPSTYKVCGLFIFNKQ. The helical transmembrane segment at 367–387 threads the bilayer; sequence TSLAYFFYVLVQVLVLVQFDL. Topologically, residues 388-395 are extracellular; that stretch reads KNKVEKRN.

Belongs to the insect chemoreceptor superfamily. Gustatory receptor (GR) family. Gr22e subfamily. In terms of tissue distribution, expressed in the adult labellar chemosensory neurons.

It is found in the cell membrane. Functionally, probable gustatory receptor which mediates acceptance or avoidance behavior, depending on its substrates. This Drosophila melanogaster (Fruit fly) protein is Putative gustatory receptor 58a (Gr58a).